A 496-amino-acid polypeptide reads, in one-letter code: Myotilin (496 aa).

A disordered region spans residues 1–37; sequence MFNYERPKHFIQPQNPCGSRLQPPGPEVSGFPSQTKQ. Arginine 20 is subject to Omega-N-methylarginine. The segment at 78–149 is necessary for interaction with ACTN1; it reads PNPGQKVTAT…PTPKTPDHEI (72 aa). Composition is skewed to polar residues over residues 202 to 213 and 221 to 233; these read NSDVQDSPQHNP and PTSQVRSRSSSRA. The tract at residues 202-239 is disordered; the sequence is NSDVQDSPQHNPEQARLHVPTSQVRSRSSSRAEANDQD. Residues 213-491 are necessary for interaction with FLNC; the sequence is PEQARLHVPT…QRLAAQSGLY (279 aa). Residues 213–496 are necessary for interaction with ACTA1; the sequence is PEQARLHVPT…QSGLYESEEL (284 aa). Ig-like C2-type domains lie at 248 to 333 and 347 to 439; these read PRFI…ATFT and PMFI…LDVT.

This sequence belongs to the myotilin/palladin family. As to quaternary structure, homodimer. Interacts with ACTA1, ACTN1, FLNA, FLNB, FLNC, and MYOZ2. Interacts with the C-terminal region of MYOZ1. In terms of tissue distribution, expressed in skeletal muscle (at protein level).

It localises to the cell membrane. Its subcellular location is the sarcolemma. It is found in the cytoplasm. The protein resides in the cytoskeleton. The protein localises to the myofibril. It localises to the sarcomere. Its subcellular location is the z line. Functionally, component of a complex of multiple actin cross-linking proteins. Involved in the control of myofibril assembly and stability at the Z lines in muscle cells. This is Myotilin (Myot) from Mus musculus (Mouse).